Consider the following 173-residue polypeptide: Propanediol dehydratase small subunit (173 aa).

Belongs to the diol/glycerol dehydratase small subunit family. In terms of assembly, the propanediol dehydratase enzyme is a heterotrimeric complex composed of a large (PduC), a medium (PduD) and a small (PduE) subunit. Requires adenosylcob(III)alamin as cofactor.

It localises to the bacterial microcompartment. It catalyses the reaction propane-1,2-diol = propanal + H2O. Its pathway is polyol metabolism; 1,2-propanediol degradation. Its activity is regulated as follows. Inhibited by glycerol. Its function is as follows. Part of the PduCDE complex that catalyzes the dehydration of 1,2-propanediol (1,2-PD) to propionaldehyde. Required for S.typhimurium growth on 1,2-PD as the sole carbon and energy source. Localized in the bacterial microcompartment (BMC) dedicated to 1,2-PD degradation. Functionally, the 1,2-PD-specific bacterial microcompartment (BMC) concentrates low levels of 1,2-PD catabolic enzymes, concentrates volatile reaction intermediates thus enhancing pathway flux and keeps the level of toxic, mutagenic propionaldehyde low. The polypeptide is Propanediol dehydratase small subunit (Salmonella typhimurium (strain LT2 / SGSC1412 / ATCC 700720)).